The sequence spans 315 residues: UDP-N-acetylenolpyruvoylglucosamine reductase (315 aa).

The FAD-binding PCMH-type domain maps to 27 to 207; it reads RVGGPADVLY…TKRMNAITAR (181 aa). Arg172 is a catalytic residue. The disordered stretch occupies residues 214 to 236; that stretch reads IREKTSGSTFANPDPPGTPNQRK. The Proton donor role is filled by Ser221. Residue Glu297 is part of the active site.

This sequence belongs to the MurB family. FAD serves as cofactor.

It localises to the cytoplasm. It catalyses the reaction UDP-N-acetyl-alpha-D-muramate + NADP(+) = UDP-N-acetyl-3-O-(1-carboxyvinyl)-alpha-D-glucosamine + NADPH + H(+). Its pathway is cell wall biogenesis; peptidoglycan biosynthesis. Functionally, cell wall formation. This Maricaulis maris (strain MCS10) (Caulobacter maris) protein is UDP-N-acetylenolpyruvoylglucosamine reductase.